Consider the following 1273-residue polypeptide: Receptor-type tyrosine-protein phosphatase C (1273 aa).

A signal peptide spans 1–23; it reads MYLWLKLLAFSLALLGPEVFVTG. Residues 24-546 are Extracellular-facing; that stretch reads QGTTDDGLDT…KPQSTSYNSK (523 aa). A disordered region spans residues 45–192; sequence LPARTTEFTP…TEIATPQTKP (148 aa). Polar residues-rich tracts occupy residues 50 to 77, 84 to 111, and 141 to 192; these read TEFTPPSISERGNGSSETTYLPGFSSTL, QPDSQTPSARGADTQTLSSQADLTTLTA, and RNST…QTKP. The N-linked (GlcNAc...) asparagine glycan is linked to Asn-62. Residues Asn-142, Asn-153, Asn-164, Asn-178, Asn-200, Asn-245, Asn-250, Asn-271, Asn-282, Asn-327, Asn-333, Asn-371, Asn-374, Asn-471, and Asn-502 are each glycosylated (N-linked (GlcNAc...) asparagine). Fibronectin type-III domains lie at 361–452 and 453–545; these read PEML…TKAA and RPGK…SYNS. The chain crosses the membrane as a helical span at residues 547 to 567; that stretch reads ALIIFLVFLIIVTSIALLVVL. Residues 568-1273 lie on the Cytoplasmic side of the membrane; it reads YKIYDLRKKR…PMSPALTPSS (706 aa). Tyrosine-protein phosphatase domains follow at residues 622 to 881 and 913 to 1196; these read FLAE…LVEY and LEAE…MASI. Tyr-652 is subject to Phosphotyrosine. Residues Asp-790, 822–828, and Gln-866 each bind substrate; that span reads CSAGVGR. The Phosphocysteine intermediate role is filled by Cys-822. 7 positions are modified to phosphoserine: Ser-944, Ser-963, Ser-966, Ser-970, Ser-973, Ser-974, and Ser-978. The tract at residues 960–984 is disordered; that stretch reads LEMSKESEAESDESSDEDSDSEETS. Over residues 968-981 the composition is skewed to acidic residues; the sequence is AESDESSDEDSDSE. Residue Cys-1137 is the Phosphocysteine intermediate of the active site. Residues Ser-1209 and Ser-1266 each carry the phosphoserine modification. A disordered region spans residues 1219–1273; that stretch reads VDGAKQDANCVQPADPLNKAQEDSKEVGASEPASGSEEPEHSANGPMSPALTPSS.

The protein belongs to the protein-tyrosine phosphatase family. Receptor class 1/6 subfamily. In terms of assembly, interacts with SKAP1. Interacts with DPP4; the interaction is enhanced in an interleukin-12-dependent manner in activated lymphocytes. Binds GANAB and PRKCSH. Interacts with CD53; this interaction stabilizes PTPRC on the membrane and is required for optimal phosphatase activity. Interacts with CLEC10A. In terms of processing, heavily N- and O-glycosylated. The cytoplasmic domain contains potential phosphorylation sites. In terms of tissue distribution, isoform 1 and isoform 2 are found in thymocyte and lymph node. Isoform 4 and isoform 3 are found in the lymph nod.

Its subcellular location is the cell membrane. The protein localises to the membrane raft. It is found in the synapse. It carries out the reaction O-phospho-L-tyrosyl-[protein] + H2O = L-tyrosyl-[protein] + phosphate. In terms of biological role, protein tyrosine-protein phosphatase required for T-cell activation through the antigen receptor. Acts as a positive regulator of T-cell coactivation upon binding to DPP4. The first PTPase domain has enzymatic activity, while the second one seems to affect the substrate specificity of the first one. Upon T-cell activation, recruits and dephosphorylates SKAP1 and FYN. Dephosphorylates LYN, and thereby modulates LYN activity. Interacts with CLEC10A at antigen presenting cell-T cell contact; CLEC10A on immature dendritic cells recognizes Tn antigen-carrying PTPRC/CD45 receptor on effector T cells and modulates T cell activation threshold to limit autoreactivity. The protein is Receptor-type tyrosine-protein phosphatase C (Ptprc) of Rattus norvegicus (Rat).